Consider the following 272-residue polypeptide: SKA complex subunit 1 homolog (272 aa).

The stretch at 48–75 forms a coiled coil; that stretch reads ALSSMELQVQSIKDRLREETEAIPKAKK.

This sequence belongs to the SKA1 family.

The protein is SKA complex subunit 1 homolog of Arabidopsis thaliana (Mouse-ear cress).